A 189-amino-acid polypeptide reads, in one-letter code: GMP synthase [glutamine-hydrolyzing] subunit A (189 aa).

One can recognise a Glutamine amidotransferase type-1 domain in the interval 1-189 (MIVILNNGGQ…CKVCGFKFNE (189 aa)). The active-site Nucleophile is the cysteine 76. Active-site residues include histidine 163 and glutamate 165.

In terms of assembly, heterodimer composed of a glutamine amidotransferase subunit (A) and a GMP-binding subunit (B).

It catalyses the reaction XMP + L-glutamine + ATP + H2O = GMP + L-glutamate + AMP + diphosphate + 2 H(+). Its pathway is purine metabolism; GMP biosynthesis; GMP from XMP (L-Gln route): step 1/1. Catalyzes the synthesis of GMP from XMP. In Methanococcus vannielii (strain ATCC 35089 / DSM 1224 / JCM 13029 / OCM 148 / SB), this protein is GMP synthase [glutamine-hydrolyzing] subunit A.